Consider the following 335-residue polypeptide: tRNA methyltransferase 10 homolog A (335 aa).

Disordered stretches follow at residues 1–91 (MSSE…DRKR) and 279–335 (VPAH…PDPQ). Residues Ser-22 and Ser-24 each carry the phosphoserine modification. The span at 52-62 (RLWEEQREQRK) shows a compositional bias: basic and acidic residues. Positions 52-84 (RLWEEQREQRKEKRKEKRKRKKLERRCQLESNS) form a coiled coil. The span at 63 to 75 (EKRKEKRKRKKLE) shows a compositional bias: basic residues. Residues 88 to 279 (DRKRIRRHVA…TILPPRKGAV (192 aa)) form the SAM-dependent MTase TRM10-type domain. Positions 304–319 (EGEHGRDDPGSPHKEQ) are enriched in basic and acidic residues. Residues 320–335 (QGQQSSSVSAVSPDPQ) show a composition bias toward low complexity. Position 331 is a phosphoserine (Ser-331).

It belongs to the class IV-like SAM-binding methyltransferase superfamily. TRM10 family. In terms of assembly, interacts with tRNA. Ubiquitously expressed. Is more abundant in brain and pancreatic islets compared to other tissues (at protein level).

Its subcellular location is the nucleus. It is found in the nucleolus. It catalyses the reaction guanosine(9) in tRNA + S-adenosyl-L-methionine = N(1)-methylguanosine(9) in tRNA + S-adenosyl-L-homocysteine + H(+). Functionally, S-adenosyl-L-methionine-dependent guanine N(1)-methyltransferase that catalyzes the formation of N(1)-methylguanine at position 9 (m1G9) in tRNAs. Probably not able to catalyze formation of N(1)-methyladenine at position 9 (m1A9) in tRNAs. In Rattus norvegicus (Rat), this protein is tRNA methyltransferase 10 homolog A (Trmt10a).